Consider the following 276-residue polypeptide: NAD-capped RNA hydrolase NudC (276 aa).

Arg-82 provides a ligand contact to substrate. Residues Cys-112 and Cys-115 each coordinate Zn(2+). Glu-125 lines the substrate pocket. Zn(2+) contacts are provided by Cys-130 and Cys-133. Tyr-138 contacts substrate. The Nudix hydrolase domain occupies 139–262 (PRISPSMIVL…SIARYLIDLY (124 aa)). Residues Ala-172, Glu-188, and Glu-192 each coordinate a divalent metal cation. Positions 173-194 (GFAEPGESAEECLVREVREEVA) match the Nudix box motif. Position 206-213 (206-213 (QCWPFPHS)) interacts with substrate. Glu-233 provides a ligand contact to a divalent metal cation. Ala-255 lines the substrate pocket.

The protein belongs to the Nudix hydrolase family. NudC subfamily. Homodimer. Mg(2+) serves as cofactor. Requires Mn(2+) as cofactor. Zn(2+) is required as a cofactor.

The enzyme catalyses a 5'-end NAD(+)-phospho-ribonucleoside in mRNA + H2O = a 5'-end phospho-adenosine-phospho-ribonucleoside in mRNA + beta-nicotinamide D-ribonucleotide + 2 H(+). It carries out the reaction NAD(+) + H2O = beta-nicotinamide D-ribonucleotide + AMP + 2 H(+). It catalyses the reaction NADH + H2O = reduced beta-nicotinamide D-ribonucleotide + AMP + 2 H(+). Functionally, mRNA decapping enzyme that specifically removes the nicotinamide adenine dinucleotide (NAD) cap from a subset of mRNAs by hydrolyzing the diphosphate linkage to produce nicotinamide mononucleotide (NMN) and 5' monophosphate mRNA. The NAD-cap is present at the 5'-end of some mRNAs and stabilizes RNA against 5'-processing. Has preference for mRNAs with a 5'-end purine. Catalyzes the hydrolysis of a broad range of dinucleotide pyrophosphates. The chain is NAD-capped RNA hydrolase NudC from Pseudomonas entomophila (strain L48).